A 106-amino-acid chain; its full sequence is Iron-sulfur cluster assembly protein CyaY (106 aa).

It belongs to the frataxin family.

In terms of biological role, involved in iron-sulfur (Fe-S) cluster assembly. May act as a regulator of Fe-S biogenesis. This is Iron-sulfur cluster assembly protein CyaY from Klebsiella pneumoniae subsp. pneumoniae (strain ATCC 700721 / MGH 78578).